Reading from the N-terminus, the 223-residue chain is Sigma non-opioid intracellular receptor 1 (223 aa).

At 1–9 (MCWAVGRRW) the chain is on the lumenal side. The targeting to endoplasmic reticulum-associated lipid droplets stretch occupies residues 2-8 (CWAVGRR). Residues 10-30 (AWAALLLAVAAVLAQVVWLWL) form a helical membrane-spanning segment. At 31 to 223 (GTQSFVFQHE…LTTYLFGQDA (193 aa)) the chain is on the cytoplasmic side. The tract at residues 99-106 (SLSEYVLL) is important for ligand-binding. Positions 177–223 (VIPSTLGFALADTVFSTQDFLTLFYTLRAYARGLRLELTTYLFGQDA) are C-terminal hydrophobic region.

Belongs to the ERG2 family. As to quaternary structure, homotrimer. Forms a ternary complex with ANK2 and ITPR3. The complex is disrupted by agonists. Interacts with KCNA4. Interacts with KCNA2; cocaine consumption leads to increased interaction. Interacts with RNF112 in an oxidative stress-regulated manner.

The protein resides in the nucleus inner membrane. It localises to the nucleus outer membrane. The protein localises to the nucleus envelope. Its subcellular location is the cytoplasmic vesicle. It is found in the endoplasmic reticulum membrane. The protein resides in the membrane. It localises to the lipid droplet. The protein localises to the cell junction. Its subcellular location is the cell membrane. It is found in the cell projection. The protein resides in the growth cone. It localises to the postsynaptic density membrane. In terms of biological role, functions in lipid transport from the endoplasmic reticulum and is involved in a wide array of cellular functions probably through regulation of the biogenesis of lipid microdomains at the plasma membrane. Involved in the regulation of different receptors it plays a role in BDNF signaling and EGF signaling. Also regulates ion channels like the potassium channel and could modulate neurotransmitter release. Plays a role in calcium signaling through modulation together with ANK2 of the ITP3R-dependent calcium efflux at the endoplasmic reticulum. Plays a role in several other cell functions including proliferation, survival and death. Originally identified for its ability to bind various psychoactive drugs it is involved in learning processes, memory and mood alteration. Necessary for proper mitochondrial axonal transport in motor neurons, in particular the retrograde movement of mitochondria. Plays a role in protecting cells against oxidative stress-induced cell death via its interaction with RNF112. This Bos taurus (Bovine) protein is Sigma non-opioid intracellular receptor 1 (SIGMAR1).